The sequence spans 411 residues: Citrate synthase (411 aa).

Active-site residues include H304 and D363.

It belongs to the citrate synthase family.

It carries out the reaction oxaloacetate + acetyl-CoA + H2O = citrate + CoA + H(+). The protein operates within carbohydrate metabolism; tricarboxylic acid cycle; isocitrate from oxaloacetate: step 1/2. In Rickettsia massiliae, this protein is Citrate synthase (gltA).